A 272-amino-acid chain; its full sequence is NH(3)-dependent NAD(+) synthetase (272 aa).

Residue 45 to 52 (GISGGQDS) coordinates ATP. Asp51 is a binding site for Mg(2+). Arg138 contributes to the deamido-NAD(+) binding site. Thr158 lines the ATP pocket. A Mg(2+)-binding site is contributed by Glu163. Residues Lys171 and Asp178 each contribute to the deamido-NAD(+) site. ATP contacts are provided by Lys187 and Thr209. 258–259 (HK) contacts deamido-NAD(+).

The protein belongs to the NAD synthetase family. In terms of assembly, homodimer.

The catalysed reaction is deamido-NAD(+) + NH4(+) + ATP = AMP + diphosphate + NAD(+) + H(+). The protein operates within cofactor biosynthesis; NAD(+) biosynthesis; NAD(+) from deamido-NAD(+) (ammonia route): step 1/1. Functionally, catalyzes the ATP-dependent amidation of deamido-NAD to form NAD. Uses ammonia as a nitrogen source. The sequence is that of NH(3)-dependent NAD(+) synthetase from Bacillus cereus (strain ATCC 14579 / DSM 31 / CCUG 7414 / JCM 2152 / NBRC 15305 / NCIMB 9373 / NCTC 2599 / NRRL B-3711).